The primary structure comprises 381 residues: Lipid-A-disaccharide synthase (381 aa).

This sequence belongs to the LpxB family.

The enzyme catalyses a lipid X + a UDP-2-N,3-O-bis[(3R)-3-hydroxyacyl]-alpha-D-glucosamine = a lipid A disaccharide + UDP + H(+). The protein operates within bacterial outer membrane biogenesis; LPS lipid A biosynthesis. In terms of biological role, condensation of UDP-2,3-diacylglucosamine and 2,3-diacylglucosamine-1-phosphate to form lipid A disaccharide, a precursor of lipid A, a phosphorylated glycolipid that anchors the lipopolysaccharide to the outer membrane of the cell. This Rickettsia bellii (strain OSU 85-389) protein is Lipid-A-disaccharide synthase.